The chain runs to 454 residues: Membrane-bound lytic murein transglycosylase F (454 aa).

The signal sequence occupies residues 1-24 (MRRPLRRVTVVLLWVALAIGVAWF). The interval 25-265 (YDYRRSMQSL…IYNRYYTAVD (241 aa)) is non-LT domain. The interval 266–454 (TFDYVDVKKF…YDILKQKKAV (189 aa)) is LT domain. E311 is an active-site residue.

The protein in the N-terminal section; belongs to the bacterial solute-binding protein 3 family. It in the C-terminal section; belongs to the transglycosylase Slt family.

The protein resides in the cell outer membrane. The enzyme catalyses Exolytic cleavage of the (1-&gt;4)-beta-glycosidic linkage between N-acetylmuramic acid (MurNAc) and N-acetylglucosamine (GlcNAc) residues in peptidoglycan, from either the reducing or the non-reducing ends of the peptidoglycan chains, with concomitant formation of a 1,6-anhydrobond in the MurNAc residue.. Murein-degrading enzyme that degrades murein glycan strands and insoluble, high-molecular weight murein sacculi, with the concomitant formation of a 1,6-anhydromuramoyl product. Lytic transglycosylases (LTs) play an integral role in the metabolism of the peptidoglycan (PG) sacculus. Their lytic action creates space within the PG sacculus to allow for its expansion as well as for the insertion of various structures such as secretion systems and flagella. The polypeptide is Membrane-bound lytic murein transglycosylase F (Desulfosudis oleivorans (strain DSM 6200 / JCM 39069 / Hxd3) (Desulfococcus oleovorans)).